We begin with the raw amino-acid sequence, 38 residues long: Spheniscin-2 (38 aa).

Disulfide bonds link Cys-5-Cys-33, Cys-12-Cys-27, and Cys-17-Cys-34.

Monomer. In terms of tissue distribution, secreted into the stomach cavity.

It localises to the secreted. Its function is as follows. Has antifungal activity and antibacterial activity against Gram-positive and Gram-negative bacteria. Involved in the process of food preservation in the stomach during the incubation fast. May also be present during infection. This is Spheniscin-2 from Aptenodytes patagonicus (King penguin).